Here is a 221-residue protein sequence, read N- to C-terminus: uncharacterized protein (221 aa).

The H-T-H motif DNA-binding region spans 77 to 96; that stretch reads YRERAVELGVPERAILVEPN.

The protein to E.coli YdcF.

Functionally, the imp locus inhibits the extrachromosomal maintenance of the streptomyces plasmid SLP1. May function as a transcriptional activator. This is an uncharacterized protein from Streptomyces coelicolor (strain ATCC BAA-471 / A3(2) / M145).